We begin with the raw amino-acid sequence, 278 residues long: MTEAFARAKINLTLHVTGQRPDGYHLLDSLVVFADVGDRVRAEPAEALSLAITGPQAANLPVADDNLVLRAARTLGGQGARLTLEKHLPVASGIGGGSADAAAALVALARLWQVPLPDPAAVLKLGADVPVCLEGRAVRMAGVGEILTPLAAPLPEAWLVLANPGVSVPTPPVFKALARRDNPPMPDDLPGWPTVESLAALLATQRNDLEPPAIALAPEIARTRAALAAQPGCLLARMSGSGATCFGLFAAEEAARAAAEAIGTQHPGWWVAPARMVG.

K9 is a catalytic residue. ATP is bound at residue 89–99 (PVASGIGGGSA). Residue D128 is part of the active site.

Belongs to the GHMP kinase family. IspE subfamily.

The catalysed reaction is 4-CDP-2-C-methyl-D-erythritol + ATP = 4-CDP-2-C-methyl-D-erythritol 2-phosphate + ADP + H(+). The protein operates within isoprenoid biosynthesis; isopentenyl diphosphate biosynthesis via DXP pathway; isopentenyl diphosphate from 1-deoxy-D-xylulose 5-phosphate: step 3/6. In terms of biological role, catalyzes the phosphorylation of the position 2 hydroxy group of 4-diphosphocytidyl-2C-methyl-D-erythritol. The polypeptide is 4-diphosphocytidyl-2-C-methyl-D-erythritol kinase (Cereibacter sphaeroides (strain KD131 / KCTC 12085) (Rhodobacter sphaeroides)).